The chain runs to 345 residues: Protein CHROMOSOME TRANSMISSION FIDELITY 7 (345 aa).

The CCHH-type zinc-finger motif lies at 96–120 (RHCAECGAKYAPGDELDEKNHQSFH).

It belongs to the acetyltransferase family. ECO subfamily. Post-translationally, autoacetylated. As to expression, expressed in roots, stems, leaves, young seedlings and flower buds. Detected in the embryo, but not in the endosperm.

The protein localises to the nucleus. The protein resides in the cytoplasm. In terms of biological role, acetyltransferase required for the establishment of sister chromatid cohesion. Involved in preservation of genome integrity and meiosis. Required for DNA repair and for the regulation of chromosome segregation during mitotic cell division. Knock-down mutants are extremely dwarf. Regulator of sister chromatid cohesion in meiosis which negatively regulates cohesin association with chromatin, acting as an antagonist of WAPL1 and WAPL2. The polypeptide is Protein CHROMOSOME TRANSMISSION FIDELITY 7 (Arabidopsis thaliana (Mouse-ear cress)).